The following is a 214-amino-acid chain: Orotate phosphoribosyltransferase (214 aa).

Lysine 26 lines the 5-phospho-alpha-D-ribose 1-diphosphate pocket. Phenylalanine 34–phenylalanine 35 serves as a coordination point for orotate. Residues tyrosine 72–lysine 73, arginine 99, lysine 100, lysine 103, histidine 105, and aspartate 124–alanine 132 each bind 5-phospho-alpha-D-ribose 1-diphosphate. Orotate-binding residues include threonine 128 and arginine 157.

The protein belongs to the purine/pyrimidine phosphoribosyltransferase family. PyrE subfamily. In terms of assembly, homodimer. It depends on Mg(2+) as a cofactor.

The enzyme catalyses orotidine 5'-phosphate + diphosphate = orotate + 5-phospho-alpha-D-ribose 1-diphosphate. The protein operates within pyrimidine metabolism; UMP biosynthesis via de novo pathway; UMP from orotate: step 1/2. In terms of biological role, catalyzes the transfer of a ribosyl phosphate group from 5-phosphoribose 1-diphosphate to orotate, leading to the formation of orotidine monophosphate (OMP). The chain is Orotate phosphoribosyltransferase from Pseudomonas fluorescens (strain Pf0-1).